Here is a 2475-residue protein sequence, read N- to C-terminus: MGNRGSSTSSRPPLSSEANLYAKLQDHIQRQTRPFSGGGYFNGGGDKNPVQHIKDYHIDSVSSKAKLRVIEGIIRAIAKIGFKVDTKQPIEDILKDIKKQLPDPRAGSTFVKNAEKQETVCKMIADAINQEFIDLGQDKLIDTTDGAASICRQIVLYINSLTHGLRAEYLDVHGSIENTLENIKLLNDAIKQLHERMVTEVTKAAPNEEVINAVTMIEAVYRRLLNEQNLQINILTNFIDNILTPTQKELDKLQTDEVDIIKLLNDTNSVLGTKNFGKVLSYTLCNLGIAASVANKINKALQKVGLKVEQYLQSKNWAEFDKELDLKRFSGLVSAENIAEFEKAVNLLRQTFNERHKILENSCAKKGGDEEKTPLDRRIEAQRLDRKHILMEFLNKSTQAYNDFLENVKKIGIKLVKEIALTPNITRLRDALSRINDMGTIALDLSLIGFYTNAAAREERETFLTQFMLVKNVLEEQSKIDPNFKNLYDSCSRLLQIIDFYTDIVQKKYGGGEDCECTRVGGAALTVEELGLSKAARSQVDLNQAINTFMYYYYVAQIYSNLTHNKQEFQSYEENYATILGDAIAGRLMQLDTEKNARINSPAVDLARGHVGPNPGGAQEADWKAAVSAIELEYDVKRRFYRALEGLDLYLKNITKTFVNNIDSIQTVQQMLDGVRIIGRWFTEATGDTLAQVFESFPTSAGNDSNVFTDNAPAGHYYEKVAAEIQQGRSVGTLRPVRASQAKNIRDLIGRSLSNFQALKNIINAFARIGDMLGGEELRQMVPMSPLQIYKTLLEYIQHSALSVGLKNLNQSEIGGQRVALARTPEEAAQRVYLSTVRVNDALSTRWETEDVFFTFMLKSMAAKIFIVLGIYDMFERPEPVYKLIPTRMILGGADELEPEVIPEAAELYFRLPRLAEFYQKLFSFRDENVQISMLPELEGIFSGLIRIIFMRPIELINIGDYSETEIRQLIKEINVIYQHFNLEYGEQEATKKALIHFVNEINRRFGVITRTEWEKFQRIVQEARTMNDFGMMNQTNYSILPDEDGYTQSSQLLPSDRFISPSTQPTPKWRPALYNIDSVDVQTGMLQPNSQWDLVQKFRKQLSEMFEDPSLQQELGKVSYQELIRQAINELKKEHTDKIQIVSKLIQGSESLADTDVNKIFLFHETVITGLNLLSAIYVLLNNFRNNIKGLDLDTIQKSIIEWLRETQAANVNRANLIDWLGRKHGAISEIRNPGLVVKENDVRLSRVYPDPTTNATAPQDQNLVTETLFAWIVPYVGIPAGGGVRAEQELAARYLVDNQRIMQLLLTNIFEMTSSFNKMVQVRFPETSTAQVHLDFTGLISLIDSLMADTKYFLNLLRPHIDKNIIQYYENRSNPGSFYWLEEHLIDKLIKPPTDAGGRPLPGGELGLEGVNQIINKTYILLTKPYNVLQLRGGVQRRDAANIQINNNPQPSERFEQYGRVFSRLVFYDALENNSGLRVEQVVLGDFRLSNLIRTNNAQEENTLSYWDNMAPRTYANVNDAANNLRRYRLYGSDYGIQNNRSMMMVFNQLVASYIARFYDAPSGKIYLNLINAFANGNFSQAVMELGYTHPDLARDNIAFGHRGDPTEQSVLLLSLGLMLQRLIKDTNRQGLSQHLISTLTEIPIYLKENYRANLPLFNKMFNILISQGELLKQFIQYTNVQLARPNLMGLLGANNDSVIYYNNNINVPMTGLSVGQAALRGIGGVFRPNVTLMPLGDAQNNTSDVVRKRLVAVIDGIIRGSHTLADSAMEVLHELTDHPIYLETEEHFIQNYMSRYNKEPLMPFSLSLYYLRDLRIENNEVYDPLLYPNLESGSPEFKLLYGTRKLLGNDPVQLSDMPGVQLIMKNYNETVVAREQITPTRFEHFYTHAIQALRFIVNIRSFKTVMMYNENTFGGVNLISENRDDKPIITAGIGMNAVYSLRKTLQDVISFVESSYQEEQINHIHKIVSPKGQTRTLGSNRERERIFNLFDMNIIPINVNALMRSIPLANIYNYDYSFEEIACLMYGISAEKVRSLNTAAPQPDIAEVLNIPNRPPMNTREFMLKLLINPYVSVSITQYGNELMSKGSAGYMSRIFRGDNALNMGRPKFLSDQIFNKVLFGSLYPTQFDYDEAGPGLAAGIQRGREQWGQPLSEYINQALHELVRTIRIPQKLRVLRNIIVKNQLIADLTTIREQLVSMRREVENMIQTPEIQNNPTPEVIAAAQNWTQQYRARVDTLINFIGNIGQPNSMLDLIQTITPVTVRAQLGVIFNRHGIPVPHPRQILQTDDEATQWFMTNILNIPAIIMTPFTDLANDLRTFLETLERYVFNVPRWLGPSTGRVARAPVRMAPRDMRHPISYTENSVLTYITEQNREEGPWSIVKQVGVGIQKPTLVQIGKDRFDTRLIRNLIFITNIQRLLRLRLNLELSQFRNVLVSPDHIINPSITEYGFSITGPSETFSDKQYDSDIRIL.

Residue Gly2 is the site of N-myristoyl glycine; by host attachment. Positions 2185-2212 form a coiled coil; that stretch reads KNQLIADLTTIREQLVSMRREVENMIQT.

It belongs to the asfivirus polyprotein pp220 family. The polyprotein is not glycosylated. Post-translationally, specific enzymatic cleavages in vivo by the viral pS273R protease yield mature proteins.

Its subcellular location is the host cytoplasm. The protein resides in the host perinuclear region. It localises to the virion. The protein localises to the host nucleus. In terms of biological role, essential for the core assembly. Its myristoyl moiety may function as a membrane-anchoring signal to bind the developing core shell to the inner viral envelope. The structural protein p34 is a component of the virus core shell. Its function is as follows. The structural protein p14 is a component of the virus core shell. Functionally, the structural protein p37 is a component of the virus core shell. In terms of biological role, the structural protein p150 is a component of the virus core shell. The chain is Polyprotein pp220 from Ornithodoros (relapsing fever ticks).